Consider the following 134-residue polypeptide: MIFSMLRKLPKVTCRDVLPEIRAICIEEIGCWMQSYSTSFLTDSYLKYIGWTLHDKHREVRVKCVKALKGLYGNRDLTARLELFTGRFKDWMVSMIVDREYSVAVEAVRLLILILKNMEGVLMDVDCESVYPIV.

An SCD domain is found at 10–95 (PKVTCRDVLP…GRFKDWMVSM (86 aa)).

Belongs to the SCC3 family.

The protein resides in the nucleus. In Homo sapiens (Human), this protein is Putative STAG3-like protein 2 (STAG3L2).